We begin with the raw amino-acid sequence, 300 residues long: UDP-3-O-acyl-N-acetylglucosamine deacetylase (300 aa).

Zn(2+) contacts are provided by His76, His235, and Asp239. His262 (proton donor) is an active-site residue.

Belongs to the LpxC family. Zn(2+) serves as cofactor.

The catalysed reaction is a UDP-3-O-[(3R)-3-hydroxyacyl]-N-acetyl-alpha-D-glucosamine + H2O = a UDP-3-O-[(3R)-3-hydroxyacyl]-alpha-D-glucosamine + acetate. It functions in the pathway glycolipid biosynthesis; lipid IV(A) biosynthesis; lipid IV(A) from (3R)-3-hydroxytetradecanoyl-[acyl-carrier-protein] and UDP-N-acetyl-alpha-D-glucosamine: step 2/6. Catalyzes the hydrolysis of UDP-3-O-myristoyl-N-acetylglucosamine to form UDP-3-O-myristoylglucosamine and acetate, the committed step in lipid A biosynthesis. The chain is UDP-3-O-acyl-N-acetylglucosamine deacetylase from Halorhodospira halophila (strain DSM 244 / SL1) (Ectothiorhodospira halophila (strain DSM 244 / SL1)).